We begin with the raw amino-acid sequence, 416 residues long: Adenylosuccinate synthetase (416 aa).

GTP contacts are provided by residues Gly13–Lys19 and Gly41–Thr43. Asp14 functions as the Proton acceptor in the catalytic mechanism. 2 residues coordinate Mg(2+): Asp14 and Gly41. IMP contacts are provided by residues Asp14–Lys17, Asn39–His42, Thr126, Arg140, Gln220, Thr235, and Arg299. Catalysis depends on His42, which acts as the Proton donor. A substrate-binding site is contributed by Val295 to Arg301. GTP contacts are provided by residues Arg301, Lys327–Asp329, and Ser405–Ser407.

Belongs to the adenylosuccinate synthetase family. In terms of assembly, homodimer. Mg(2+) is required as a cofactor.

Its subcellular location is the cytoplasm. The catalysed reaction is IMP + L-aspartate + GTP = N(6)-(1,2-dicarboxyethyl)-AMP + GDP + phosphate + 2 H(+). The protein operates within purine metabolism; AMP biosynthesis via de novo pathway; AMP from IMP: step 1/2. In terms of biological role, plays an important role in the de novo pathway of purine nucleotide biosynthesis. Catalyzes the first committed step in the biosynthesis of AMP from IMP. This Campylobacter jejuni subsp. jejuni serotype O:23/36 (strain 81-176) protein is Adenylosuccinate synthetase.